Reading from the N-terminus, the 232-residue chain is Ribosomal RNA small subunit methyltransferase G (232 aa).

Residues G93, L98, 144 to 145 (VE), and R163 each bind S-adenosyl-L-methionine.

It belongs to the methyltransferase superfamily. RNA methyltransferase RsmG family.

The protein localises to the cytoplasm. It catalyses the reaction guanosine(527) in 16S rRNA + S-adenosyl-L-methionine = N(7)-methylguanosine(527) in 16S rRNA + S-adenosyl-L-homocysteine. Functionally, specifically methylates the N7 position of guanine in position 527 of 16S rRNA. This Burkholderia pseudomallei (strain 668) protein is Ribosomal RNA small subunit methyltransferase G.